The following is a 495-amino-acid chain: Transcription termination/antitermination protein NusA (495 aa).

Positions 135 to 200 (GKIVTGTVKK…KTAQLFVTRS (66 aa)) constitute an S1 motif domain. The region spanning 302–374 (NHSMDIAVEA…LDEEFAQILV (73 aa)) is the KH domain.

It belongs to the NusA family. Monomer. Binds directly to the core enzyme of the DNA-dependent RNA polymerase and to nascent RNA.

The protein resides in the cytoplasm. Functionally, participates in both transcription termination and antitermination. The polypeptide is Transcription termination/antitermination protein NusA (Haemophilus influenzae (strain ATCC 51907 / DSM 11121 / KW20 / Rd)).